The following is a 350-amino-acid chain: Putative zinc metalloprotease jhp_0242 (350 aa).

Residue His16 coordinates Zn(2+). Glu17 is an active-site residue. His20 is a Zn(2+) binding site. 5 helical membrane passes run Trp43–Val63, Leu94–Phe114, Leu249–Leu269, Met277–Ile297, and Leu326–Ile346. The region spanning Ala108–Asn177 is the PDZ domain.

It belongs to the peptidase M50B family. Zn(2+) is required as a cofactor.

It localises to the cell inner membrane. This Helicobacter pylori (strain J99 / ATCC 700824) (Campylobacter pylori J99) protein is Putative zinc metalloprotease jhp_0242.